The chain runs to 363 residues: Small ribosomal subunit biogenesis GTPase RsgA (363 aa).

Residues 112–268 (HQQVIAANID…LIDTPGMREL (157 aa)) enclose the CP-type G domain. GTP contacts are provided by residues 157–160 (TKAD) and 210–218 (GSSGAGKST). Residues Cys291, Cys296, His298, and Cys304 each contribute to the Zn(2+) site. Residues 340–363 (RVAQNNRGKGSGKRPASVDRPGRR) are disordered.

Belongs to the TRAFAC class YlqF/YawG GTPase family. RsgA subfamily. As to quaternary structure, monomer. Associates with 30S ribosomal subunit, binds 16S rRNA. Requires Zn(2+) as cofactor.

The protein resides in the cytoplasm. Its function is as follows. One of several proteins that assist in the late maturation steps of the functional core of the 30S ribosomal subunit. Helps release RbfA from mature subunits. May play a role in the assembly of ribosomal proteins into the subunit. Circularly permuted GTPase that catalyzes slow GTP hydrolysis, GTPase activity is stimulated by the 30S ribosomal subunit. The polypeptide is Small ribosomal subunit biogenesis GTPase RsgA (Xanthomonas euvesicatoria pv. vesicatoria (strain 85-10) (Xanthomonas campestris pv. vesicatoria)).